Here is a 350-residue protein sequence, read N- to C-terminus: tRNA dimethylallyltransferase (350 aa).

The disordered stretch occupies residues 1 to 20; sequence MMNTERPAGPLRPPHPPHPP. Residues 10–20 are compositionally biased toward pro residues; it reads PLRPPHPPHPP. ATP is bound at residue 27-34; sequence GPTASGKT. 29-34 lines the substrate pocket; sequence TASGKT. Interaction with substrate tRNA regions lie at residues 52–55, 176–180, and 273–278; these read DSAL, QRIAR, and RCVGYR.

Belongs to the IPP transferase family. As to quaternary structure, monomer. The cofactor is Mg(2+).

The enzyme catalyses adenosine(37) in tRNA + dimethylallyl diphosphate = N(6)-dimethylallyladenosine(37) in tRNA + diphosphate. Functionally, catalyzes the transfer of a dimethylallyl group onto the adenine at position 37 in tRNAs that read codons beginning with uridine, leading to the formation of N6-(dimethylallyl)adenosine (i(6)A). The protein is tRNA dimethylallyltransferase of Albidiferax ferrireducens (strain ATCC BAA-621 / DSM 15236 / T118) (Rhodoferax ferrireducens).